A 574-amino-acid chain; its full sequence is MATTAMRMIISIIFISTYVTHITLCQNITEEFYQSTCSAVSRGYLSALRTGWYTSVVTIELSKIQKNVCNSTDSNVKLIKQELERYNNAVVELQSLMQNEPASSSRAKRGIPELIHYKRNSTKKFYGLMGKKRKRRFLGFLLGIGSAIASGVAVSKVLHLEGEVNKIKNALLSTNKAVVSLSNGVSVLTSKVLDLKNYIDKELLPKVNNHDCKISNIATVIEFQQKNNRLLEIAREFSVNAGITTPLSTYMLTNSELLSLINDMPITNDQKKLMSSNVQIVRQQSYSIMSVVKEEVMAYVVQLPIYGVIDTPCWKLHTSPLCTTDNKEGSNICLTRTDRGWYCDNAGSVSFFPQAETCKVQSNRVFCDTMNSLTLPTDVNLCNTDIFNAKYDCKIMTSKTDISSSVITSIGAIVSCYGKTKCTASNKNRGIIKTFSNGCDYVSNRGVDTVSVGNTLYYVNKLEGKALYIKGEPIINYYDPLVFPSDEFDASIAQVNAKINQSLAFIRRSDELLHSVDVGKSTTNVVITTIIIVIVVVILMLIAVGLLFYSKTRSTPIMLGKDQLSGINNLSFSK.

The signal sequence occupies residues 1-25 (MATTAMRMIISIIFISTYVTHITLC). At 26-524 (QNITEEFYQS…SVDVGKSTTN (499 aa)) the chain is on the extracellular side. Residues Asn-27 and Asn-70 are each glycosylated (N-linked (GlcNAc...) asparagine; by host). 7 disulfide bridges follow: Cys-37–Cys-439, Cys-69–Cys-212, Cys-313–Cys-343, Cys-322–Cys-333, Cys-358–Cys-367, Cys-382–Cys-393, and Cys-416–Cys-422. Positions 76 to 96 (VKLIKQELERYNNAVVELQSL) form a coiled coil. Residue Asn-120 is glycosylated (N-linked (GlcNAc...) asparagine; by host). The tract at residues 137 to 157 (FLGFLLGIGSAIASGVAVSKV) is fusion peptide. Positions 158–209 (LHLEGEVNKIKNALLSTNKAVVSLSNGVSVLTSKVLDLKNYIDKELLPKVNN) form a coiled coil. Residues 481–516 (LVFPSDEFDASIAQVNAKINQSLAFIRRSDELLHSV) are a coiled coil. Asn-500 carries N-linked (GlcNAc...) asparagine; by host glycosylation. The helical transmembrane segment at 525–550 (VVITTIIIVIVVVILMLIAVGLLFYS) threads the bilayer. The Cytoplasmic segment spans residues 551-574 (KTRSTPIMLGKDQLSGINNLSFSK).

It belongs to the paramyxoviruses fusion glycoprotein family. As to quaternary structure, homotrimer. Heterodimer with fusion protein F2; disulfide-linked. Part of a complex composed of F1, F2 and G glycoproteins. As a heterodimer with F2, interacts with host RHOA; this interaction facilitates virus-induced syncytium formation. Homotrimer. Heterodimer with fusion protein F1; disulfide-linked. Part of a complex composed of F1, F2 and G glycoproteins. As a heterodimer with F1, interacts with host RHOA; this interaction facilitates virus-induced syncytium formation. Post-translationally, the F glycoprotein is synthesized as a F0 inactive precursor that is heavily N-glycosylated and processed at two sites by a host furin-like protease probably in the Golgi. The cleavage site between p27 and F1 may occur after endocytosis to yield the mature F1 and F2 proteins. Both cleavages are required for membrane fusion and p27 is released from the processed protein.

It is found in the host Golgi apparatus membrane. The protein localises to the virion membrane. It localises to the host cell membrane. In terms of biological role, inactive precursor that is cleaved at two sites by a furin-like protease to give rise to the mature F1 and F2 fusion glycoproteins. Class I viral fusion protein. Under the current model, the protein has at least 3 conformational states: pre-fusion native state, pre-hairpin intermediate state, and post-fusion hairpin state. During viral and plasma cell membrane fusion, the coiled coil regions assume a trimer-of-hairpins structure, positioning the fusion peptide in close proximity to the C-terminal region of the ectodomain. The formation of this structure appears to drive apposition and subsequent fusion of viral and cellular membranes leading to delivery of the nucleocapsid into the cytoplasm. This fusion is pH independent and occurs at the plasma or endosomal membrane. The trimer of F1-F2 (F protein) also facilitates the attachment and entry into the host cell. Later in infection, F protein expressed at the plasma membrane of infected cells can mediate fusion with adjacent cells to form syncytia, a cytopathic effect that could lead to tissue necrosis. Functionally, major determinant of the species specificity of RSV infection. The trimer of F1-F2 (F protein) also facilitates the attachment and entry into the host cell. Later in infection, F protein expressed at the plasma membrane of infected cells can mediate fusion with adjacent cells to form syncytia, a cytopathic effect that could lead to tissue necrosis. The chain is Fusion glycoprotein F0 (F) from Bos taurus (Bovine).